The following is a 353-amino-acid chain: Photosystem II D2 protein (353 aa).

Threonine 2 is subject to N-acetylthreonine. Threonine 2 carries the phosphothreonine modification. A helical transmembrane segment spans residues 41-61 (CAYFALGGWFTGTTFVTSWYT). Histidine 118 lines the chlorophyll a pocket. The chain crosses the membrane as a helical span at residues 125–141 (GFMLRQFELARSVQLRP). Positions 130 and 143 each coordinate pheophytin a. The chain crosses the membrane as a helical span at residues 153 to 166 (VFVSVFLIYPLGQS). Residue histidine 198 coordinates chlorophyll a. A helical transmembrane segment spans residues 208–228 (AALLCAIHGATVENTLFEDGD). Residues histidine 215 and phenylalanine 262 each contribute to the a plastoquinone site. Histidine 215 contacts Fe cation. Histidine 269 is a binding site for Fe cation. Residues 279 to 295 (GLWMSALGVVGLALNLR) traverse the membrane as a helical segment.

The protein belongs to the reaction center PufL/M/PsbA/D family. As to quaternary structure, PSII is composed of 1 copy each of membrane proteins PsbA, PsbB, PsbC, PsbD, PsbE, PsbF, PsbH, PsbI, PsbJ, PsbK, PsbL, PsbM, PsbT, PsbX, PsbY, PsbZ, Psb30/Ycf12, at least 3 peripheral proteins of the oxygen-evolving complex and a large number of cofactors. It forms dimeric complexes. The D1/D2 heterodimer binds P680, chlorophylls that are the primary electron donor of PSII, and subsequent electron acceptors. It shares a non-heme iron and each subunit binds pheophytin, quinone, additional chlorophylls, carotenoids and lipids. There is also a Cl(-1) ion associated with D1 and D2, which is required for oxygen evolution. The PSII complex binds additional chlorophylls, carotenoids and specific lipids. serves as cofactor.

It is found in the plastid. It localises to the chloroplast thylakoid membrane. The enzyme catalyses 2 a plastoquinone + 4 hnu + 2 H2O = 2 a plastoquinol + O2. In terms of biological role, photosystem II (PSII) is a light-driven water:plastoquinone oxidoreductase that uses light energy to abstract electrons from H(2)O, generating O(2) and a proton gradient subsequently used for ATP formation. It consists of a core antenna complex that captures photons, and an electron transfer chain that converts photonic excitation into a charge separation. The D1/D2 (PsbA/PsbD) reaction center heterodimer binds P680, the primary electron donor of PSII as well as several subsequent electron acceptors. D2 is needed for assembly of a stable PSII complex. The polypeptide is Photosystem II D2 protein (Platanus occidentalis (Sycamore)).